The following is a 136-amino-acid chain: Large ribosomal subunit protein uL16 (136 aa).

It belongs to the universal ribosomal protein uL16 family. As to quaternary structure, part of the 50S ribosomal subunit.

Functionally, binds 23S rRNA and is also seen to make contacts with the A and possibly P site tRNAs. This chain is Large ribosomal subunit protein uL16, found in Erwinia tasmaniensis (strain DSM 17950 / CFBP 7177 / CIP 109463 / NCPPB 4357 / Et1/99).